Reading from the N-terminus, the 298-residue chain is Bifunctional protein FolD (298 aa).

NADP(+) is bound by residues 165 to 167, Ser-194, and Ile-235; that span reads GRG.

This sequence belongs to the tetrahydrofolate dehydrogenase/cyclohydrolase family. In terms of assembly, homodimer.

It carries out the reaction (6R)-5,10-methylene-5,6,7,8-tetrahydrofolate + NADP(+) = (6R)-5,10-methenyltetrahydrofolate + NADPH. It catalyses the reaction (6R)-5,10-methenyltetrahydrofolate + H2O = (6R)-10-formyltetrahydrofolate + H(+). The protein operates within one-carbon metabolism; tetrahydrofolate interconversion. Catalyzes the oxidation of 5,10-methylenetetrahydrofolate to 5,10-methenyltetrahydrofolate and then the hydrolysis of 5,10-methenyltetrahydrofolate to 10-formyltetrahydrofolate. The polypeptide is Bifunctional protein FolD (Amoebophilus asiaticus (strain 5a2)).